The primary structure comprises 444 residues: Deoxyguanosinetriphosphate triphosphohydrolase-like protein (444 aa).

The tract at residues 1–26 (MIASPWHERRLNEDKKRRNDHRSPFQ) is disordered. The region spanning 59 to 250 (RLTHSLEVSQ…MELADDIAYA (192 aa)) is the HD domain.

The protein belongs to the dGTPase family. Type 2 subfamily.

This Shewanella woodyi (strain ATCC 51908 / MS32) protein is Deoxyguanosinetriphosphate triphosphohydrolase-like protein.